Consider the following 242-residue polypeptide: Thymocyte nuclear protein 1 (242 aa).

The tract at residues 1 to 64 (MPWPSRKRDK…KKAKESDSGG (64 aa)) is disordered. A Nuclear localization signal motif is present at residues 6–10 (RKRDK). Residues 10 to 27 (KGAVADKKEPDAKIAKTE) are compositionally biased toward basic and acidic residues. Residues 28–37 (EETEDKEEEE) show a composition bias toward acidic residues.

Post-translationally, undergoes proteolytic processing during lymphocyte apoptosis. Phosphorylated. As to expression, expressed at high levels in bursa of fabricus, thymus and spleen. Also found in the liver, intestine, heart and brain.

It localises to the nucleus. In terms of biological role, specifically binds 5-hydroxymethylcytosine (5hmC), suggesting that it acts as a specific reader of 5hmC. In Gallus gallus (Chicken), this protein is Thymocyte nuclear protein 1 (THYN1).